Here is a 379-residue protein sequence, read N- to C-terminus: Cytochrome b (379 aa).

Transmembrane regions (helical) follow at residues 33 to 53 (FGSLLGLCLIVQTLTGLFLAM), 77 to 98 (WLIRNLHANGASMFFICLYLHI), 113 to 133 (WNIGVVLLLLVMAAAFVGYVL), and 178 to 198 (FFTFHFLLPFTIIALTMLHLL). The heme b site is built by His-83 and His-97. The heme b site is built by His-182 and His-196. Position 201 (His-201) interacts with a ubiquinone. A run of 4 helical transmembrane segments spans residues 226-246 (YKDLLGATLMITTLLTLVLFS), 288-308 (LGGVLALLFSILILMIVPLLH), 320-340 (FSQTLFWLLISNVLILTWIGG), and 347-367 (FIIIGQLASVTYFTLFLVVMP).

The protein belongs to the cytochrome b family. The cytochrome bc1 complex contains 3 respiratory subunits (MT-CYB, CYC1 and UQCRFS1), 2 core proteins (UQCRC1 and UQCRC2) and probably 6 low-molecular weight proteins. It depends on heme b as a cofactor.

The protein resides in the mitochondrion inner membrane. Functionally, component of the ubiquinol-cytochrome c reductase complex (complex III or cytochrome b-c1 complex) that is part of the mitochondrial respiratory chain. The b-c1 complex mediates electron transfer from ubiquinol to cytochrome c. Contributes to the generation of a proton gradient across the mitochondrial membrane that is then used for ATP synthesis. In Iguana iguana (Common iguana), this protein is Cytochrome b (MT-CYB).